The primary structure comprises 510 residues: Inner membrane protein YeeR (510 aa).

A topological domain (cytoplasmic) is located at residue Met-1. Residues 2–22 (LQIVGALILLIAGFAILRLLF) traverse the membrane as a helical segment. Topologically, residues 23–30 (RALISTAS) are periplasmic. The helical transmembrane segment at 31–51 (ALAGLILLCLFGPALLAGYIT) threads the bilayer. Residues 52-61 (ERITRLFHIR) are Cytoplasmic-facing. A helical transmembrane segment spans residues 62–82 (WLAGVFLTIAGMIISFMWGLD). At 83 to 94 (GKHIALEAHTFD) the chain is on the periplasmic side. A helical membrane pass occupies residues 95-115 (SVKFILTTALAGGLLAVPLQI). Residues 116–136 (KNIQQNGITPEDISKEINGYY) lie on the Cytoplasmic side of the membrane. A helical transmembrane segment spans residues 137–157 (CCFYTAFFLMACSACAPLIAL). Over 158-164 (QYDISPS) the chain is Periplasmic. The chain crosses the membrane as a helical span at residues 165-185 (LMWWGGLLYWLAALVTLLWAA). Residues 186–510 (SQIQALKKLT…KIREGKVEER (325 aa)) lie on the Cytoplasmic side of the membrane.

It localises to the cell inner membrane. The protein is Inner membrane protein YeeR (yeeR) of Escherichia coli (strain K12).